Consider the following 436-residue polypeptide: GTPase Der (436 aa).

2 consecutive EngA-type G domains span residues Pro-4–Val-167 and Ile-175–Asn-351. Residues Gly-10–Ser-17, Asp-57–Ile-61, Asn-119–Asp-122, Gly-181–Ser-188, Asp-229–Met-233, and Asn-294–Asp-297 each bind GTP. The region spanning Arg-352–Lys-436 is the KH-like domain.

Belongs to the TRAFAC class TrmE-Era-EngA-EngB-Septin-like GTPase superfamily. EngA (Der) GTPase family. In terms of assembly, associates with the 50S ribosomal subunit.

GTPase that plays an essential role in the late steps of ribosome biogenesis. This chain is GTPase Der, found in Streptococcus thermophilus (strain ATCC BAA-491 / LMD-9).